Here is a 277-residue protein sequence, read N- to C-terminus: Caspase-3 (277 aa).

Residue Met1 is modified to N-acetylmethionine. Propeptides lie at residues 1 to 9 (MENTENSVD) and 10 to 28 (SKSI…KSVD). The residue at position 11 (Lys11) is an N6-acetyllysine. The residue at position 26 (Ser26) is a Phosphoserine. Residues His121 and Cys163 contribute to the active site. Cys163 is modified (S-nitrosocysteine; in inhibited form).

This sequence belongs to the peptidase C14A family. Heterotetramer that consists of two anti-parallel arranged heterodimers, each one formed by a 17 kDa (p17) and a 12 kDa (p12) subunit. Interacts with BIRC6/bruce. Post-translationally, cleavage by granzyme B, caspase-6, caspase-8 and caspase-10 generates the two active subunits. Additional processing of the propeptides is likely due to the autocatalytic activity of the activated protease. Active heterodimers between the small subunit of caspase-7 protease and the large subunit of caspase-3 also occur and vice versa. S-nitrosylated on its catalytic site cysteine in unstimulated cell lines and denitrosylated upon activation of the Fas apoptotic pathway, associated with an increase in intracellular caspase activity. Fas therefore activates caspase-3 not only by inducing the cleavage of the caspase zymogen to its active subunits, but also by stimulating the denitrosylation of its active site thiol. In terms of processing, ubiquitinated by BIRC6; this activity is inhibited by DIABLO/SMAC.

Its subcellular location is the cytoplasm. The enzyme catalyses Strict requirement for an Asp residue at positions P1 and P4. It has a preferred cleavage sequence of Asp-Xaa-Xaa-Asp-|- with a hydrophobic amino-acid residue at P2 and a hydrophilic amino-acid residue at P3, although Val or Ala are also accepted at this position.. Its activity is regulated as follows. Inhibited by BIRC6; following inhibition of BIRC6-caspase binding by DIABLO/SMAC, BIRC6 is subjected to caspase cleavage, leading to an increase in active caspases. Involved in the activation cascade of caspases responsible for apoptosis execution. At the onset of apoptosis, it proteolytically cleaves poly(ADP-ribose) polymerase PARP1 at a '216-Asp-|-Gly-217' bond. Cleaves and activates sterol regulatory element binding proteins (SREBPs) between the basic helix-loop-helix leucine zipper domain and the membrane attachment domain. Cleaves and activates caspase-6, -7 and -9 (CASP6, CASP7 and CASP9, respectively). Cleaves and inactivates interleukin-18 (IL18). Triggers cell adhesion in sympathetic neurons through RET cleavage. Cleaves IL-1 beta between an Asp and an Ala, releasing the mature cytokine which is involved in a variety of inflammatory processes. Cleaves and inhibits serine/threonine-protein kinase AKT1 in response to oxidative stress. Acts as an inhibitor of type I interferon production during virus-induced apoptosis by mediating cleavage of antiviral proteins CGAS, IRF3 and MAVS, thereby preventing cytokine overproduction. Also involved in pyroptosis by mediating cleavage and activation of gasdermin-E (GSDME). Cleaves XRCC4 and phospholipid scramblase proteins XKR4, XKR8 and XKR9, leading to promote phosphatidylserine exposure on apoptotic cell surface. Cleaves BIRC6 following inhibition of BIRC6-caspase binding by DIABLO/SMAC. The sequence is that of Caspase-3 (CASP3) from Macaca fascicularis (Crab-eating macaque).